Here is a 265-residue protein sequence, read N- to C-terminus: uncharacterized protein (265 aa).

A helical transmembrane segment spans residues 1–21 (MAFNNSTIIIIIVIAFAFFLI). 2 N-linked (GlcNAc...) asparagine; by host glycosylation sites follow: N74 and N142.

It localises to the host membrane. Its subcellular location is the virion. This is an uncharacterized protein from Acanthamoeba polyphaga mimivirus (APMV).